The sequence spans 180 residues: Putative adenylate kinase (180 aa).

5 residues coordinate ATP: glycine 10, glycine 12, lysine 13, threonine 14, and threonine 15. The interval 30-50 is NMP; the sequence is NLRDFALEKGCGREVDGEVEV. Residues 99–109 form an LID region; the sequence is ERGYSKEKIGE. Residues arginine 100 and lysine 138 each contribute to the ATP site.

The protein belongs to the adenylate kinase family. AK6 subfamily. Interacts with uS11. Not a structural component of 40S pre-ribosomes, but transiently interacts with them by binding to uS11.

It catalyses the reaction AMP + ATP = 2 ADP. It carries out the reaction ATP + H2O = ADP + phosphate + H(+). In terms of biological role, broad-specificity nucleoside monophosphate (NMP) kinase that catalyzes the reversible transfer of the terminal phosphate group between nucleoside triphosphates and monophosphates. Also has ATPase activity. Involved in the late maturation steps of the 30S ribosomal particles, specifically 16S rRNA maturation. While NMP activity is not required for ribosome maturation, ATPase activity is. Associates transiently with small ribosomal subunit protein uS11. ATP hydrolysis breaks the interaction with uS11. May temporarily remove uS11 from the ribosome to enable a conformational change of the ribosomal RNA that is needed for the final maturation step of the small ribosomal subunit. In Pyrococcus abyssi (strain GE5 / Orsay), this protein is Putative adenylate kinase.